The chain runs to 190 residues: ADP-ribosylation factor F (190 aa).

Residues 34–40 (DGAGKST), 75–79 (DIGGQ), and 136–139 (NKQD) contribute to the GTP site.

This sequence belongs to the small GTPase superfamily. Arf family.

It is found in the golgi apparatus. GTP-binding protein that may be involved in protein trafficking. May modulate vesicle budding and uncoating within the Golgi apparatus. This is ADP-ribosylation factor F (arrF) from Dictyostelium discoideum (Social amoeba).